The chain runs to 183 residues: Inner membrane protein YgjV (183 aa).

The Periplasmic segment spans residues 1-2; it reads MT. The chain crosses the membrane as a helical span at residues 3–23; the sequence is AYWLAQGVGVIAFLIGITTFF. Residues 24–38 lie on the Cytoplasmic side of the membrane; it reads NRDERRFKKQLSVYS. Residues 39-59 traverse the membrane as a helical segment; sequence AVIGVHFFLLGTYPAGASAIL. Residues 60-71 are Periplasmic-facing; sequence NAIRTLITLRTR. Transmembrane regions (helical) follow at residues 72–92 and 93–113; these read SLWV…AKFH and HPVE…LFCC. The Periplasmic portion of the chain corresponds to 114 to 133; it reads KGLTMRCVMWFSTCCWVIHN. The chain crosses the membrane as a helical span at residues 134-154; the sequence is FWAGSIGGTMIEGSFLLMNGL. The Cytoplasmic portion of the chain corresponds to 155-183; that stretch reads NIIRFWRMQKRGIDPFKVEKTPSAVDERG.

It is found in the cell inner membrane. In Escherichia coli (strain K12), this protein is Inner membrane protein YgjV (ygjV).